The primary structure comprises 442 residues: Protein translocase subunit SecY (442 aa).

The next 10 membrane-spanning stretches (helical) occupy residues 29–49 (LITIGLLILVRVGIFIPVPDI), 69–89 (IFTGGGLSTVGIFALGILPYI), 126–146 (YIAFGWCIIQGLGLTVGLLRP), 153–173 (PLFIFQTVLAITAGSMFVMWI), 182–202 (IGNGASLLIFVNIVATLPQTL), 217–237 (ITAVVLLMLVFLVMIVGIVFV), 274–294 (VMPIIFASAVLILPSSLAGFA), 320–340 (VYTVVYSVMIFFFSYFYASLI), 377–397 (LTFLGAIFLSFVATLPIFVEQ), and 400–420 (GVTTFQGLGATSLLILVGVAI).

It belongs to the SecY/SEC61-alpha family. Component of the Sec protein translocase complex. Heterotrimer consisting of SecY, SecE and SecG subunits. The heterotrimers can form oligomers, although 1 heterotrimer is thought to be able to translocate proteins. Interacts with the ribosome. Interacts with SecDF, and other proteins may be involved. Interacts with SecA.

It localises to the cell inner membrane. It is found in the cellular thylakoid membrane. In terms of biological role, the central subunit of the protein translocation channel SecYEG. Consists of two halves formed by TMs 1-5 and 6-10. These two domains form a lateral gate at the front which open onto the bilayer between TMs 2 and 7, and are clamped together by SecE at the back. The channel is closed by both a pore ring composed of hydrophobic SecY resides and a short helix (helix 2A) on the extracellular side of the membrane which forms a plug. The plug probably moves laterally to allow the channel to open. The ring and the pore may move independently. The polypeptide is Protein translocase subunit SecY (Synechocystis sp. (strain ATCC 27184 / PCC 6803 / Kazusa)).